The primary structure comprises 384 residues: Queuine tRNA-ribosyltransferase (384 aa).

Asp103 acts as the Proton acceptor in catalysis. Substrate is bound by residues 103 to 107 (DSGGF), Asp157, Gln200, and Gly227. The RNA binding stretch occupies residues 258–264 (GVGTYRE). The active-site Nucleophile is Asp277. Positions 282 to 286 (TRLAR) are RNA binding; important for wobble base 34 recognition. Positions 315, 317, 320, and 346 each coordinate Zn(2+).

Belongs to the queuine tRNA-ribosyltransferase family. In terms of assembly, homodimer. Within each dimer, one monomer is responsible for RNA recognition and catalysis, while the other monomer binds to the replacement base PreQ1. It depends on Zn(2+) as a cofactor.

It carries out the reaction 7-aminomethyl-7-carbaguanine + guanosine(34) in tRNA = 7-aminomethyl-7-carbaguanosine(34) in tRNA + guanine. It functions in the pathway tRNA modification; tRNA-queuosine biosynthesis. Functionally, catalyzes the base-exchange of a guanine (G) residue with the queuine precursor 7-aminomethyl-7-deazaguanine (PreQ1) at position 34 (anticodon wobble position) in tRNAs with GU(N) anticodons (tRNA-Asp, -Asn, -His and -Tyr). Catalysis occurs through a double-displacement mechanism. The nucleophile active site attacks the C1' of nucleotide 34 to detach the guanine base from the RNA, forming a covalent enzyme-RNA intermediate. The proton acceptor active site deprotonates the incoming PreQ1, allowing a nucleophilic attack on the C1' of the ribose to form the product. After dissociation, two additional enzymatic reactions on the tRNA convert PreQ1 to queuine (Q), resulting in the hypermodified nucleoside queuosine (7-(((4,5-cis-dihydroxy-2-cyclopenten-1-yl)amino)methyl)-7-deazaguanosine). The chain is Queuine tRNA-ribosyltransferase from Synechococcus elongatus (strain ATCC 33912 / PCC 7942 / FACHB-805) (Anacystis nidulans R2).